The following is a 51-amino-acid chain: uncharacterized protein (51 aa).

A helical transmembrane segment spans residues 20-42 (NFFSRMWNAVVFGFGAAIGASVA).

Its subcellular location is the membrane. This is an uncharacterized protein from Schizosaccharomyces pombe (strain 972 / ATCC 24843) (Fission yeast).